The chain runs to 183 residues: Caspase recruitment domain-containing protein 19 (183 aa).

A disulfide bond links cysteine 7 and cysteine 77. The region spanning 8 to 99 (DRLVQDTPFL…PLHSHLPSRY (92 aa)) is the CARD domain. A helical membrane pass occupies residues 122 to 142 (GPMSFLAGLGLAAGLALLLYC).

Associates with BCL10 by CARD-CARD interaction.

It localises to the endoplasmic reticulum membrane. It is found in the mitochondrion membrane. Its function is as follows. Plays a role in inhibiting the effects of BCL10-induced activation of NF-kappa-B. The chain is Caspase recruitment domain-containing protein 19 from Mus musculus (Mouse).